Here is a 673-residue protein sequence, read N- to C-terminus: UvrABC system protein B (673 aa).

One can recognise a Helicase ATP-binding domain in the interval 28 to 414 (ASILQNKRSQ…EAGGEIVEQL (387 aa)). 41–48 (GITGSGKT) contacts ATP. A Beta-hairpin motif is present at residues 94–117 (YYDYYQPEAYVPRTDTYIEKDMSI). One can recognise a Helicase C-terminal domain in the interval 433–595 (QVDDCLAEIR…ITPRTVKREI (163 aa)). Positions 633-668 (RLKIKECEKEMKKAAKEFRFEEAADWRDQMRRYQQI) constitute a UVR domain.

It belongs to the UvrB family. As to quaternary structure, forms a heterotetramer with UvrA during the search for lesions. Interacts with UvrC in an incision complex.

Its subcellular location is the cytoplasm. In terms of biological role, the UvrABC repair system catalyzes the recognition and processing of DNA lesions. A damage recognition complex composed of 2 UvrA and 2 UvrB subunits scans DNA for abnormalities. Upon binding of the UvrA(2)B(2) complex to a putative damaged site, the DNA wraps around one UvrB monomer. DNA wrap is dependent on ATP binding by UvrB and probably causes local melting of the DNA helix, facilitating insertion of UvrB beta-hairpin between the DNA strands. Then UvrB probes one DNA strand for the presence of a lesion. If a lesion is found the UvrA subunits dissociate and the UvrB-DNA preincision complex is formed. This complex is subsequently bound by UvrC and the second UvrB is released. If no lesion is found, the DNA wraps around the other UvrB subunit that will check the other stand for damage. In Protochlamydia amoebophila (strain UWE25), this protein is UvrABC system protein B.